Consider the following 359-residue polypeptide: Dihydroorotate dehydrogenase (quinone) (359 aa).

FMN contacts are provided by residues 61 to 65 and T85; that span reads AGYDK. K65 lines the substrate pocket. 110–114 serves as a coordination point for substrate; it reads NRLGF. FMN is bound by residues N139 and N170. Residue N170 coordinates substrate. S173 functions as the Nucleophile in the catalytic mechanism. N175 provides a ligand contact to substrate. Residues K211 and S239 each coordinate FMN. Position 240-241 (240-241) interacts with substrate; that stretch reads NT. Residues G262, G291, and 312–313 contribute to the FMN site; that span reads YT.

Belongs to the dihydroorotate dehydrogenase family. Type 2 subfamily. Monomer. Requires FMN as cofactor.

Its subcellular location is the cell membrane. It carries out the reaction (S)-dihydroorotate + a quinone = orotate + a quinol. The protein operates within pyrimidine metabolism; UMP biosynthesis via de novo pathway; orotate from (S)-dihydroorotate (quinone route): step 1/1. Catalyzes the conversion of dihydroorotate to orotate with quinone as electron acceptor. The polypeptide is Dihydroorotate dehydrogenase (quinone) (Mesorhizobium japonicum (strain LMG 29417 / CECT 9101 / MAFF 303099) (Mesorhizobium loti (strain MAFF 303099))).